The following is a 251-amino-acid chain: HTH-type transcriptional regulator UlaR (251 aa).

Residues 3–58 enclose the HTH deoR-type domain; it reads EAQRHQILLEMLAQLGFVTVEKVVERLGISPATARRDINKLDESGKLKKVRNGAEA. The segment at residues 20 to 39 is a DNA-binding region (H-T-H motif); the sequence is VTVEKVVERLGISPATARRD.

It localises to the cytoplasm. Its function is as follows. Represses ulaG and the ulaABCDEF operon. The chain is HTH-type transcriptional regulator UlaR from Escherichia coli O139:H28 (strain E24377A / ETEC).